The following is a 159-amino-acid chain: 3-hydroxyacyl-[acyl-carrier-protein] dehydratase FabZ (159 aa).

His59 is an active-site residue.

This sequence belongs to the thioester dehydratase family. FabZ subfamily.

The protein localises to the cytoplasm. It carries out the reaction a (3R)-hydroxyacyl-[ACP] = a (2E)-enoyl-[ACP] + H2O. Its function is as follows. Involved in unsaturated fatty acids biosynthesis. Catalyzes the dehydration of short chain beta-hydroxyacyl-ACPs and long chain saturated and unsaturated beta-hydroxyacyl-ACPs. This Caulobacter vibrioides (strain ATCC 19089 / CIP 103742 / CB 15) (Caulobacter crescentus) protein is 3-hydroxyacyl-[acyl-carrier-protein] dehydratase FabZ.